We begin with the raw amino-acid sequence, 322 residues long: Malate dehydrogenase (322 aa).

Residues 10–15 (GSGQIG) and Asp-34 contribute to the NAD(+) site. Arg-83 and Arg-89 together coordinate substrate. Residues Asn-96 and 119–121 (ITN) each bind NAD(+). Substrate-binding residues include Asn-121 and Arg-152. The Proton acceptor role is filled by His-176.

This sequence belongs to the LDH/MDH superfamily. MDH type 3 family.

The enzyme catalyses (S)-malate + NAD(+) = oxaloacetate + NADH + H(+). Functionally, catalyzes the reversible oxidation of malate to oxaloacetate. This is Malate dehydrogenase from Bradyrhizobium sp. (strain ORS 278).